The chain runs to 76 residues: Large ribosomal subunit protein bL31 (76 aa).

It belongs to the bacterial ribosomal protein bL31 family. Type A subfamily. Part of the 50S ribosomal subunit.

Its function is as follows. Binds the 23S rRNA. This chain is Large ribosomal subunit protein bL31, found in Methylocella silvestris (strain DSM 15510 / CIP 108128 / LMG 27833 / NCIMB 13906 / BL2).